Here is a 47-residue protein sequence, read N- to C-terminus: Zinc-finger protein TK0143 (47 aa).

The segment at 18–41 (FRCPRCGMVFRSAKAYTRHVNKAH) adopts a C2H2-type zinc-finger fold. Residues cysteine 20, cysteine 23, histidine 36, and histidine 41 each coordinate Zn(2+).

As to quaternary structure, crystallized in association with 70S ribosomes. Zn(2+) is required as a cofactor.

The polypeptide is Zinc-finger protein TK0143 (Thermococcus kodakarensis (strain ATCC BAA-918 / JCM 12380 / KOD1) (Pyrococcus kodakaraensis (strain KOD1))).